Reading from the N-terminus, the 223-residue chain is 2-C-methyl-D-erythritol 4-phosphate cytidylyltransferase (223 aa).

It belongs to the IspD/TarI cytidylyltransferase family. IspD subfamily.

It carries out the reaction 2-C-methyl-D-erythritol 4-phosphate + CTP + H(+) = 4-CDP-2-C-methyl-D-erythritol + diphosphate. It participates in isoprenoid biosynthesis; isopentenyl diphosphate biosynthesis via DXP pathway; isopentenyl diphosphate from 1-deoxy-D-xylulose 5-phosphate: step 2/6. Functionally, catalyzes the formation of 4-diphosphocytidyl-2-C-methyl-D-erythritol from CTP and 2-C-methyl-D-erythritol 4-phosphate (MEP). The sequence is that of 2-C-methyl-D-erythritol 4-phosphate cytidylyltransferase from Synechococcus sp. (strain WH7803).